We begin with the raw amino-acid sequence, 80 residues long: Large ribosomal subunit protein bL31 (80 aa).

Belongs to the bacterial ribosomal protein bL31 family. Type A subfamily. In terms of assembly, part of the 50S ribosomal subunit.

Binds the 23S rRNA. The sequence is that of Large ribosomal subunit protein bL31 from Nostoc punctiforme (strain ATCC 29133 / PCC 73102).